We begin with the raw amino-acid sequence, 185 residues long: Elongation factor P (185 aa).

Belongs to the elongation factor P family.

The protein resides in the cytoplasm. It participates in protein biosynthesis; polypeptide chain elongation. In terms of biological role, involved in peptide bond synthesis. Stimulates efficient translation and peptide-bond synthesis on native or reconstituted 70S ribosomes in vitro. Probably functions indirectly by altering the affinity of the ribosome for aminoacyl-tRNA, thus increasing their reactivity as acceptors for peptidyl transferase. The sequence is that of Elongation factor P from Paraburkholderia phytofirmans (strain DSM 17436 / LMG 22146 / PsJN) (Burkholderia phytofirmans).